The chain runs to 623 residues: Leucine aminopeptidase 2 (623 aa).

A peptide contacts are provided by residues 136–138 and 261–266; these read QCE and PYGGME. H290 is a Zn(2+) binding site. E291 (proton acceptor) is an active-site residue. Residues H294 and E313 each contribute to the Zn(2+) site. Y391 (proton donor) is an active-site residue.

The protein belongs to the peptidase M1 family. Zn(2+) serves as cofactor.

It is found in the cytoplasm. Its subcellular location is the nucleus. The catalysed reaction is an epoxide + H2O = an ethanediol. Aminopeptidase that preferentially cleaves di- and tripeptides. Also has low epoxide hydrolase activity (in vitro). Can hydrolyze the epoxide leukotriene LTA(4) but it forms preferentially 5,6-dihydroxy-7,9,11,14-eicosatetraenoic acid rather than the cytokine leukotriene B(4) as the product compared to the homologous mammalian enzyme (in vitro). This Candida albicans (strain SC5314 / ATCC MYA-2876) (Yeast) protein is Leucine aminopeptidase 2 (LKH1).